The following is a 747-amino-acid chain: ATP-dependent DNA helicase Hel308 (747 aa).

ATP-binding positions include Gln-29 and 47 to 54 (VPTASGKT). Residues 34–200 (DAGVADGESL…WLDAELVDSS (167 aa)) enclose the Helicase ATP-binding domain. Residues 145 to 148 (DEVH) carry the DEAH box motif. Residues 234–434 (PTEAVVRETL…REPSMRTHLL (201 aa)) enclose the Helicase C-terminal domain. Residues 711 to 747 (AAGHQQPEMDGVTPDADVKESAAAAGTDDGQANLGDF) form a disordered region.

This sequence belongs to the helicase family. Hel308 subfamily. Monomer.

It carries out the reaction Couples ATP hydrolysis with the unwinding of duplex DNA by translocating in the 3'-5' direction.. The enzyme catalyses ATP + H2O = ADP + phosphate + H(+). Its function is as follows. DNA-dependent ATPase and 3'-5' DNA helicase that may be involved in repair of stalled replication forks. The protein is ATP-dependent DNA helicase Hel308 of Natronomonas pharaonis (strain ATCC 35678 / DSM 2160 / CIP 103997 / JCM 8858 / NBRC 14720 / NCIMB 2260 / Gabara) (Halobacterium pharaonis).